We begin with the raw amino-acid sequence, 272 residues long: RELT-like protein 1 (272 aa).

The signal sequence occupies residues 1 to 23 (MALWGLPGSAVLAASVFVGGAVS). At 24 to 58 (SPLVAADNTGSHTLHSRAETTPSSPTNNPGNGHPE) the chain is on the extracellular side. The disordered stretch occupies residues 33–52 (GSHTLHSRAETTPSSPTNNP). The helical transmembrane segment at 59 to 79 (YIAYVLVPVFFVMGLLGVLIC) threads the bilayer. Over 80–272 (HLLKKKGYRC…PVKRERSDTE (193 aa)) the chain is Cytoplasmic. A coiled-coil region spans residues 90-114 (TTEAEQEVEEEKVEKIELNDSINEN). Phosphoserine is present on residues Ser-110 and Ser-115. 2 disordered regions span residues 146-171 (DIES…PGAT) and 235-272 (EHKS…SDTE). The segment covering 156–166 (PGSPPVSPGPL) has biased composition (pro residues). The segment covering 235–245 (EHKSNQKERRS) has biased composition (basic and acidic residues). 2 positions are modified to phosphoserine: Ser-245 and Ser-248.

It belongs to the RELT family. Interacts with RELT, RELL2, OXSR1 and PLSCR1.

The protein resides in the cell membrane. In terms of biological role, induces activation of MAPK14/p38 cascade, when overexpressed. Induces apoptosis, when overexpressed. This Mus musculus (Mouse) protein is RELT-like protein 1 (Rell1).